The sequence spans 239 residues: Fatty acid metabolism regulator protein (239 aa).

One can recognise an HTH gntR-type domain in the interval 6 to 74 (KGPASFAEKY…HGKPTQVNNF (69 aa)). A DNA-binding region (H-T-H motif) is located at residues 34-53 (ERELSELIGVTRTTLREVLQ).

As to quaternary structure, homodimer.

Its subcellular location is the cytoplasm. Functionally, multifunctional regulator of fatty acid metabolism. The polypeptide is Fatty acid metabolism regulator protein (Shewanella denitrificans (strain OS217 / ATCC BAA-1090 / DSM 15013)).